The chain runs to 347 residues: Magnesium-protoporphyrin IX monomethyl ester [oxidative] cyclase (347 aa).

It belongs to the AcsF family. Fe cation serves as cofactor.

It carries out the reaction Mg-protoporphyrin IX 13-monomethyl ester + 3 NADPH + 3 O2 + 2 H(+) = 3,8-divinyl protochlorophyllide a + 3 NADP(+) + 5 H2O. The protein operates within porphyrin-containing compound metabolism; chlorophyll biosynthesis (light-independent). Its function is as follows. Catalyzes the formation of the isocyclic ring in chlorophyll biosynthesis. Mediates the cyclase reaction, which results in the formation of divinylprotochlorophyllide (Pchlide) characteristic of all chlorophylls from magnesium-protoporphyrin IX 13-monomethyl ester (MgPMME). In Prochlorococcus marinus (strain SARG / CCMP1375 / SS120), this protein is Magnesium-protoporphyrin IX monomethyl ester [oxidative] cyclase.